The sequence spans 197 residues: Nucleoside triphosphate pyrophosphatase (197 aa).

Aspartate 71 serves as the catalytic Proton acceptor.

The protein belongs to the Maf family. A divalent metal cation serves as cofactor.

It localises to the cytoplasm. The enzyme catalyses a ribonucleoside 5'-triphosphate + H2O = a ribonucleoside 5'-phosphate + diphosphate + H(+). The catalysed reaction is a 2'-deoxyribonucleoside 5'-triphosphate + H2O = a 2'-deoxyribonucleoside 5'-phosphate + diphosphate + H(+). Nucleoside triphosphate pyrophosphatase. May have a dual role in cell division arrest and in preventing the incorporation of modified nucleotides into cellular nucleic acids. The sequence is that of Nucleoside triphosphate pyrophosphatase from Trichormus variabilis (strain ATCC 29413 / PCC 7937) (Anabaena variabilis).